Reading from the N-terminus, the 221-residue chain is MNYLCLVVTLVAVAGAISGEKFSDDNTGYQSTPSLRIRTTPGRRRQTPRTIGPPYTRRTLRTTTDYSTTVENGNLTTPAANSTEKGNGLYGLRRQTPRTIGPPYTRRTLRTTTGYWTTVEKGNGTTPAANSTEKGNRPYGRRRQTPRTIGPPYTRRTTTDYWAAVEKGYLTTPAANSTEKESRPNATQRREISWTFGPLYTWRTTKGYGTTLETTNATSTS.

The signal sequence occupies residues 1–19 (MNYLCLVVTLVAVAGAISG). A propeptide spanning residues 20-45 (EKFSDDNTGYQSTPSLRIRTTPGRRR) is cleaved from the precursor. Positions 21-155 (KFSDDNTGYQ…PRTIGPPYTR (135 aa)) are disordered. The segment covering 25 to 34 (DNTGYQSTPS) has biased composition (polar residues). Positions 48–69 (PRTIGPPYTRRTLRTTTDYSTT) are enriched in low complexity. Composition is skewed to polar residues over residues 70–85 (VENG…STEK) and 123–133 (NGTTPAANSTE). Residues 191 to 221 (EISWTFGPLYTWRTTKGYGTTLETTNATSTS) constitute a propeptide that is removed on maturation.

Salivary glands.

The protein localises to the secreted. Suppress host inflammatory response. Exerts significant anti-inflammatory functions, either by directly inhibiting host secretion of inflammatory factors such as tumor necrosis factor-alpha (TNF), monocyte chemotactic protein-1 (CCL2), and interferon-gamma (IFNG) or by indirectly increasing the secretion of immunosuppressant cytokine of interleukin-10 (IL10). Also potently scavenges free radical in vitro in a rapid manner. All tested concentrations of this peptide have little effect on the cell viability. In vivo, inhibits hind paw adjuvant-induced inflammation in mouse in a dose-dependent manner. In terms of biological role, suppress host inflammatory response. Exerts significant anti-inflammatory functions, either by directly inhibiting host secretion of inflammatory factors such as tumor necrosis factor-alpha (TNF), monocyte chemotactic protein-1 (CCL2), and interferon-gamma (IFNG) or by indirectly increasing the secretion of immunosuppressant cytokine of interleukin-10 (IL10). Also potently scavenges free radical in vitro in a rapid manner. Low concentrations of this peptide have little effect on the cell viability, whereas high concentrations increase the cell viability by 10-20%. In vivo, inhibits hind paw adjuvant-induced inflammation in mouse in a dose-dependent manner. Its function is as follows. Not studied but probably similar to Hyalomin-B1. This Hyalomma asiaticum asiaticum (Tick) protein is Immunoregulatory peptides.